A 254-amino-acid chain; its full sequence is Methylthioribulose-1-phosphate dehydratase (254 aa).

Residue C110 coordinates substrate. Zn(2+) is bound by residues H127 and H129. E156 acts as the Proton donor/acceptor in catalysis. H212 serves as a coordination point for Zn(2+).

It belongs to the aldolase class II family. MtnB subfamily. It depends on Zn(2+) as a cofactor.

It localises to the cytoplasm. The enzyme catalyses 5-(methylsulfanyl)-D-ribulose 1-phosphate = 5-methylsulfanyl-2,3-dioxopentyl phosphate + H2O. It functions in the pathway amino-acid biosynthesis; L-methionine biosynthesis via salvage pathway; L-methionine from S-methyl-5-thio-alpha-D-ribose 1-phosphate: step 2/6. Catalyzes the dehydration of methylthioribulose-1-phosphate (MTRu-1-P) into 2,3-diketo-5-methylthiopentyl-1-phosphate (DK-MTP-1-P). The polypeptide is Methylthioribulose-1-phosphate dehydratase (Talaromyces marneffei (strain ATCC 18224 / CBS 334.59 / QM 7333) (Penicillium marneffei)).